A 31-amino-acid polypeptide reads, in one-letter code: Cycloviolacin-O14 (31 aa).

The cyclopeptide (Gly-Asn) cross-link spans 1–31; that stretch reads GSIPACGESCFKGKCYTPGCSCSKYPLCAKN. Intrachain disulfides connect cysteine 6-cysteine 20, cysteine 10-cysteine 22, and cysteine 15-cysteine 28.

This is a cyclic peptide. Expressed in leaves and petioles but not in petals, roots and runners (at protein level).

Its function is as follows. Probably participates in a plant defense mechanism. Has hemolytic activity. The chain is Cycloviolacin-O14 from Viola odorata (Sweet violet).